The chain runs to 502 residues: ATP synthase subunit alpha (502 aa).

169-176 (GDRATGKT) lines the ATP pocket.

The protein belongs to the ATPase alpha/beta chains family. As to quaternary structure, F-type ATPases have 2 components, CF(1) - the catalytic core - and CF(0) - the membrane proton channel. CF(1) has five subunits: alpha(3), beta(3), gamma(1), delta(1), epsilon(1). CF(0) has three main subunits: a(1), b(2) and c(9-12). The alpha and beta chains form an alternating ring which encloses part of the gamma chain. CF(1) is attached to CF(0) by a central stalk formed by the gamma and epsilon chains, while a peripheral stalk is formed by the delta and b chains.

The protein localises to the cell inner membrane. The catalysed reaction is ATP + H2O + 4 H(+)(in) = ADP + phosphate + 5 H(+)(out). Its function is as follows. Produces ATP from ADP in the presence of a proton gradient across the membrane. The alpha chain is a regulatory subunit. This is ATP synthase subunit alpha from Hydrogenobaculum sp. (strain Y04AAS1).